The chain runs to 482 residues: Glutamate-rich WD repeat-containing protein 1 (482 aa).

Disordered regions lie at residues M1–G75 and Q148–D180. Composition is skewed to acidic residues over residues N27–G63 and E157–D180. 5 WD repeats span residues N191 to D231, G294 to T334, A337 to P377, Y383 to E423, and Q446 to E482.

The protein localises to the nucleus. The protein resides in the nucleolus. The sequence is that of Glutamate-rich WD repeat-containing protein 1 (grwd1) from Dictyostelium discoideum (Social amoeba).